Here is a 579-residue protein sequence, read N- to C-terminus: Adipocyte plasma membrane-associated protein Hemomucin (579 aa).

Over 1-6 (MGLLYA) the chain is Cytoplasmic. The helical transmembrane segment at 7-29 (LRVRIMNFMIFFLLIILMPGLPP) threads the bilayer. The Extracellular portion of the chain corresponds to 30-579 (RTTFPFKDYI…INKQGVNVEL (550 aa)). N-linked (GlcNAc...) asparagine glycosylation is found at Asn213 and Asn217. Residues 427-579 (GLEASIGVPP…INKQGVNVEL (153 aa)) form a disordered region. Over residues 435 to 529 (PPSKATPKPK…PKPTTTTTPT (95 aa)) the composition is skewed to low complexity.

It belongs to the strictosidine synthase family. Interacts with sturkopf. O-glycosylated. Glycosylated in the ovary of 4 day old females. In terms of processing, phosphorylated. As to expression, detected in ovaries (at protein level). In larvae, detected in the fat body, salivary glands, imaginal disks and gut (at protein level). In adults, expressed in the cardia, and in regions of the ventriculus including the area posterior to the cardia. In females also expressed in follicle cells.

The protein localises to the cell membrane. Functionally, transmembrane mucin that may be involved in cellular adhesion and the innate immune response. Membrane-tethered mucins are involved in many cell surface functions and form a physical barrier around cells to regulate cell-cell and/or cell-substrate interactions, and protect against pathogens or harmful extracellular conditions. This mucin likely acts in hemocyte adhesion as it is released from hemocytes during coagulation and is also able to bind lipophorin particles which form part of the hemocyte coagulogen. Able to induce expression of the antibacterial proteins in the presence of GalNAc-specific lectins and so probably also functions in the innate immune response. This chain is Adipocyte plasma membrane-associated protein Hemomucin, found in Drosophila melanogaster (Fruit fly).